A 454-amino-acid chain; its full sequence is Phosphoglucosamine mutase (454 aa).

Ser-104 serves as the catalytic Phosphoserine intermediate. 4 residues coordinate Mg(2+): Ser-104, Asp-241, Asp-243, and Asp-245. A Phosphoserine modification is found at Ser-104.

It belongs to the phosphohexose mutase family. It depends on Mg(2+) as a cofactor. Activated by phosphorylation.

It catalyses the reaction alpha-D-glucosamine 1-phosphate = D-glucosamine 6-phosphate. Functionally, catalyzes the conversion of glucosamine-6-phosphate to glucosamine-1-phosphate. This Paenarthrobacter aurescens (strain TC1) protein is Phosphoglucosamine mutase.